A 412-amino-acid polypeptide reads, in one-letter code: Proteasome-activating nucleotidase (412 aa).

Residues 15-72 (EDLYRYLLERVTNLEDRNTELREQLRQIEADKRYLETQKVRYEREVRKFKGEIEQMKS) are a coiled coil. ATP is bound by residues 197–202 (GTGKTL) and His336. Residues 410-412 (MFA) are docks into pockets in the proteasome alpha-ring to cause gate opening.

The protein belongs to the AAA ATPase family. As to quaternary structure, homohexamer. The hexameric complex has a two-ring architecture resembling a top hat that caps the 20S proteasome core at one or both ends. Upon ATP-binding, the C-terminus of PAN interacts with the alpha-rings of the proteasome core by binding to the intersubunit pockets.

It localises to the cytoplasm. Functionally, ATPase which is responsible for recognizing, binding, unfolding and translocation of substrate proteins into the archaeal 20S proteasome core particle. Is essential for opening the gate of the 20S proteasome via an interaction with its C-terminus, thereby allowing substrate entry and access to the site of proteolysis. Thus, the C-termini of the proteasomal ATPase function like a 'key in a lock' to induce gate opening and therefore regulate proteolysis. Unfolding activity requires energy from ATP hydrolysis, whereas ATP binding alone promotes ATPase-20S proteasome association which triggers gate opening, and supports translocation of unfolded substrates. This chain is Proteasome-activating nucleotidase, found in Methanosphaerula palustris (strain ATCC BAA-1556 / DSM 19958 / E1-9c).